A 70-amino-acid polypeptide reads, in one-letter code: Large ribosomal subunit protein bL28 (70 aa).

The protein belongs to the bacterial ribosomal protein bL28 family.

This is Large ribosomal subunit protein bL28 from Thermosipho melanesiensis (strain DSM 12029 / CIP 104789 / BI429).